Here is a 199-residue protein sequence, read N- to C-terminus: Inner membrane-spanning protein YciB (199 aa).

Helical transmembrane passes span 4–24, 36–56, 64–84, 90–110, 135–155, and 162–182; these read FIDFIPLILFFIVYKLEPRIV, IFSATAVLILASLLVYGTLFL, GQWITLLACLVFGGMTLTFQS, WKAPVVNWLFALGFAASHFIG, LAWVAFFVFSGCANLFVAFTF, and FKVFGSLGMTVLFLVGQGVFL.

It belongs to the YciB family.

The protein localises to the cell inner membrane. Plays a role in cell envelope biogenesis, maintenance of cell envelope integrity and membrane homeostasis. The polypeptide is Inner membrane-spanning protein YciB (Azotobacter vinelandii (strain DJ / ATCC BAA-1303)).